A 691-amino-acid chain; its full sequence is Elongation factor G (691 aa).

Residues 10–284 (KMYRNIGIMA…AIVKYLPSPL (275 aa)) form the tr-type G domain. GTP is bound by residues 19 to 26 (AHIDAGKT), 83 to 87 (DTPGH), and 137 to 140 (NKMD).

The protein belongs to the TRAFAC class translation factor GTPase superfamily. Classic translation factor GTPase family. EF-G/EF-2 subfamily.

Its subcellular location is the cytoplasm. Catalyzes the GTP-dependent ribosomal translocation step during translation elongation. During this step, the ribosome changes from the pre-translocational (PRE) to the post-translocational (POST) state as the newly formed A-site-bound peptidyl-tRNA and P-site-bound deacylated tRNA move to the P and E sites, respectively. Catalyzes the coordinated movement of the two tRNA molecules, the mRNA and conformational changes in the ribosome. The sequence is that of Elongation factor G from Clostridium tetani (strain Massachusetts / E88).